The following is a 1360-amino-acid chain: Transmembrane protein 94 (1360 aa).

At 1–64 (MDLREKHLGE…FLHLSNRCSC (64 aa)) the chain is on the cytoplasmic side. A helical membrane pass occupies residues 65–85 (FHWPGASLMLLAVLLLLCCCG). The Lumenal portion of the chain corresponds to 86–92 (GQPAGSQ). A helical transmembrane segment spans residues 93–113 (GVELVNASALFLLLLLNLVLI). The Cytoplasmic segment spans residues 114 to 273 (GRQDRLKRRE…RPVTALDNER (160 aa)). Phosphoserine occurs at positions 221 and 225. A helical membrane pass occupies residues 274–294 (FTVQSVMLHYAVPVVLAGFLI). Over 295–320 (TNALRFMFKAPGVTSWQYTLLQLQVN) the chain is Lumenal. The helical transmembrane segment at 321–341 (GMLPILPLLFPVLWVLATACG) threads the bilayer. Over 342–1096 (EARVLAQMSK…RHATYGIRKC (755 aa)) the chain is Cytoplasmic. Residues 417 to 422 (DKQGIL) carry the DKQGIL motif. Residues serine 444, serine 445, and serine 454 each carry the phosphoserine modification. The interval 487-545 (EQERSDWLADGPKPSEPYPHHKGHGRSKHPSGSNVSFSRDTEGGEEEPSKAQPGTEGDP) is disordered. Positions 506-515 (HHKGHGRSKH) are enriched in basic residues. 4 positions are modified to phosphoserine: serine 517, serine 522, serine 802, and serine 945. A helical membrane pass occupies residues 1097–1117 (FLFLLQCQLTLVVIQFLSCLV). Over 1118–1124 (QLPPLLS) the chain is Lumenal. A helical membrane pass occupies residues 1125–1145 (TTDILWLSCFCYPLLSISLLG). At 1146-1171 (KPPHSSIMSMATGKNLQSIPKKTQHY) the chain is on the cytoplasmic side. The helical transmembrane segment at 1172–1192 (FLLCFLLKFSLTISSCLVCFG) threads the bilayer. Residues 1193 to 1232 (FTLQSFCDSARARNLTNCSSVMLCSNDDRAPAWFEDFANG) are Lumenal-facing. Residues asparagine 1206 and asparagine 1209 are each glycosylated (N-linked (GlcNAc...) asparagine). Residues 1233-1253 (LLSAQKLTAALIVLHTVFISI) form a helical membrane-spanning segment. Residues 1254 to 1269 (THVHRTKPLWRKSPLT) are Cytoplasmic-facing. Residues 1270 to 1290 (NLWWAVTVPVVLLGQVVQTVV) form a helical membrane-spanning segment. Topologically, residues 1291 to 1310 (DLQLWTHRDSRVHFGLEDVP) are lumenal. A helical transmembrane segment spans residues 1311–1331 (LLTWLLGCLSLVLVVVTNEIV). Residues 1332 to 1360 (KLHEIRVRVRYQKRQKLQFETKLGMNSPF) are Cytoplasmic-facing. Positions 1355 to 1357 (GMN) match the GMN; metal-binding motif motif.

Forms homooligomers.

Its subcellular location is the endoplasmic reticulum membrane. Functionally, could function in the uptake of Mg(2+) from the cytosol into the endoplasmic reticulum and regulate intracellular Mg(2+) homeostasis. The polypeptide is Transmembrane protein 94 (Mus musculus (Mouse)).